Reading from the N-terminus, the 517-residue chain is Ribosome assembly protein 4 (517 aa).

Residues methionine 1–aspartate 25 are disordered. Positions leucine 34–alanine 128 are ubiquitin-like (UBL) domain. 8 WD repeats span residues glycine 144–threonine 184, glycine 187–glutamine 226, glycine 230–serine 277, glycine 278–asparagine 316, glutamate 351–valine 397, glycine 402–asparagine 441, glycine 444–aspartate 483, and glycine 486–asparagine 517.

It belongs to the NLE1/RSA4 family. In terms of assembly, associates with the pre-60S ribosomal particle. Interacts (via WD repeats) with uL18. Interacts (via UBL domain) with MDN1 (via VWFA/MIDAS domain). Interacts (via WD repeats) with NSA2.

It localises to the nucleus. Its subcellular location is the nucleolus. Involved in ribosome biogenesis. Required for processing and efficient intra-nuclear transport of pre-60S ribosomal subunits. Interacts with the AAA-ATPase Midasin, which is essential for the ATP-dependent dissociation of a group of nonribosomal factors from the pre-60S particle. The sequence is that of Ribosome assembly protein 4 from Chaetomium thermophilum (strain DSM 1495 / CBS 144.50 / IMI 039719) (Thermochaetoides thermophila).